The following is a 201-amino-acid chain: MRRAWILLTLGLVACVSAESRAELTSDKDMYLDNSSIEEASGVYPIDDDDYASASGSGADEDVESPELTTSRPLPKILLTSAAPKVETTTLNIQNKIPAQTKSPEETDKEKVHLSDSERKMDPAEEDTNVYTEKHSDSLFKRTEVLAAVIAGGVIGFLFAIFLILLLVYRMRKKDEGSYDLGERKPSSAAYQKAPTKEFYA.

An N-terminal signal peptide occupies residues 1-18; that stretch reads MRRAWILLTLGLVACVSA. Residues 19–144 are Extracellular-facing; sequence ESRAELTSDK…HSDSLFKRTE (126 aa). 3 O-linked (Xyl...) (glycosaminoglycan) serine glycosylation sites follow: serine 41, serine 55, and serine 57. 2 disordered regions span residues 42–70 and 90–130; these read GVYP…ELTT and TLNI…DTNV. Polar residues predominate over residues 90–102; sequence TLNIQNKIPAQTK. O-linked (GalNAc...) threonine glycosylation occurs at threonine 101. The span at 103–123 shows a compositional bias: basic and acidic residues; the sequence is SPEETDKEKVHLSDSERKMDP. Position 115 is a phosphoserine; by FAM20C (serine 115). A helical transmembrane segment spans residues 145–169; that stretch reads VLAAVIAGGVIGFLFAIFLILLLVY. The Cytoplasmic portion of the chain corresponds to 170 to 201; the sequence is RMRKKDEGSYDLGERKPSSAAYQKAPTKEFYA. A disordered region spans residues 178–201; that stretch reads SYDLGERKPSSAAYQKAPTKEFYA. Position 187 is a phosphoserine (serine 187).

It belongs to the syndecan proteoglycan family. As to quaternary structure, interacts (via cytoplasmic domain) with SARM1. Forms a complex with SDCBP and PDCD6IP. O-glycosylated with core 1 or possibly core 8 glycans. Contains heparan sulfate. Also contains chondroitin sulfate.

Its subcellular location is the membrane. Functionally, cell surface proteoglycan which regulates dendritic arbor morphogenesis. In Homo sapiens (Human), this protein is Syndecan-2 (SDC2).